The sequence spans 255 residues: Pimeloyl-[acyl-carrier protein] methyl ester esterase (255 aa).

Substrate is bound by residues Trp18, 78–79 (SL), and 139–143 (FLALD). Ser78 (nucleophile) is an active-site residue. Active-site residues include Asp203 and His233. His233 provides a ligand contact to substrate.

It belongs to the AB hydrolase superfamily. Carboxylesterase BioH family. In terms of assembly, monomer.

It is found in the cytoplasm. It carries out the reaction 6-carboxyhexanoyl-[ACP] methyl ester + H2O = 6-carboxyhexanoyl-[ACP] + methanol + H(+). It functions in the pathway cofactor biosynthesis; biotin biosynthesis. Its function is as follows. The physiological role of BioH is to remove the methyl group introduced by BioC when the pimeloyl moiety is complete. It allows to synthesize pimeloyl-ACP via the fatty acid synthetic pathway through the hydrolysis of the ester bonds of pimeloyl-ACP esters. The polypeptide is Pimeloyl-[acyl-carrier protein] methyl ester esterase (Xylella fastidiosa (strain 9a5c)).